The primary structure comprises 155 residues: MMRPVSSNNVAFCASGKSSCLSQDPMRGVDQFGLYPTQQSKFSHTVTHKNISCQTQEAINETHLQTSTSRDLDTKSDLKKKKNVGRSGKRGRPSGTTKSAGYRTSTGRPLGTTKAAGFKTSPGRPLGTTKAAGYKVSPGRPPGKKQQALMCSSDA.

The span at 60–69 (NETHLQTSTS) shows a compositional bias: polar residues. Residues 60–155 (NETHLQTSTS…QQALMCSSDA (96 aa)) form a disordered region. Residues 78-92 (LKKKKNVGRSGKRGR) are compositionally biased toward basic residues. Residues 94–107 (SGTTKSAGYRTSTG) show a composition bias toward polar residues.

Belongs to the UPF0461 family.

This Xenopus laevis (African clawed frog) protein is UPF0461 protein C5orf24 homolog.